Consider the following 591-residue polypeptide: Probable indole-3-acetic acid-amido synthetase GH3.11 (591 aa).

Belongs to the IAA-amido conjugating enzyme family. Expressed in etiolated and green seedlings, roots, callus and highly in flowers.

Its function is as follows. May catalyze the synthesis of indole-3-acetic acid (IAA)-amino acid conjugates, providing a mechanism for the plant to cope with the presence of excess auxin. The polypeptide is Probable indole-3-acetic acid-amido synthetase GH3.11 (GH3.11) (Oryza sativa subsp. japonica (Rice)).